The chain runs to 447 residues: Cobyrinate a,c-diamide synthase (447 aa).

The GATase cobBQ-type domain occupies 252-439 (KIAVAFDESF…AHQHCIGNPY (188 aa)). Catalysis depends on Cys331, which acts as the Nucleophile.

The protein belongs to the CobB/CbiA family. Mg(2+) is required as a cofactor.

It catalyses the reaction cob(II)yrinate + 2 L-glutamine + 2 ATP + 2 H2O = cob(II)yrinate a,c diamide + 2 L-glutamate + 2 ADP + 2 phosphate + 2 H(+). The enzyme catalyses Ni-sirohydrochlorin + 2 L-glutamine + 2 ATP + 2 H2O = Ni-sirohydrochlorin a,c-diamide + 2 L-glutamate + 2 ADP + 2 phosphate + 2 H(+). It functions in the pathway cofactor biosynthesis; adenosylcobalamin biosynthesis; cob(II)yrinate a,c-diamide from sirohydrochlorin (anaerobic route): step 10/10. Its function is as follows. Catalyzes the ATP-dependent amidation of the two carboxylate groups at positions a and c of cobyrinate, using either L-glutamine or ammonia as the nitrogen source. Involved in the biosynthesis of the unique nickel-containing tetrapyrrole coenzyme F430, the prosthetic group of methyl-coenzyme M reductase (MCR), which plays a key role in methanogenesis and anaerobic methane oxidation. Catalyzes the ATP-dependent amidation of the two carboxylate groups at positions a and c of Ni-sirohydrochlorin, using L-glutamine or ammonia as the nitrogen source. This Methanococcus maripaludis (strain C5 / ATCC BAA-1333) protein is Cobyrinate a,c-diamide synthase.